A 680-amino-acid chain; its full sequence is MSALNSLPLPVVRLLAFFHEELSERRPGRVPQIVQLWVGCLLVILISMTFEIPFVALSLAVLFYGIQSNAFYTKFVAILFVVATVLEIGSLFLIYKWSYGEPLIRLIIAGPILMGCMFLMRTHRLGLVFFAVAIYGQTFPAMLDYPEVVVRLTLWCIVVGLYPTLLMTLIGVLWFPNRAITQMHQALNDRLDDAISHLTDSLAPLPETRIEREALALQKLNVFCLADDANWRTQSAWWQSCVATVTYIYSTLNRYDPTSFADSQAIIEFRQKLASEINKLQHAVAEGQCWQSDWRLSESEAVAARECNLENICQTLLQLGQMNPNTPPTPAAKPPSMVADAFTNPDYIRYAVKTLLACLICYTFYSGVDWEGIHTCMLTCVIVANPNVGSSYQKMVLRFGGAFCGAILALLFTLLVMPWLDNIVELLFVLAPIFLLGAWIATSSERSSYIGTQMVVTFALATLENVFGPVYDLVEIRDRALGIIIGTVVSAMIYTFVWPESEARTLPQKLAGALGMLSKVMRIPRQQEVTALRTYLQIRIGLHAAFNACEEMCQRVALERQLDSEERALLIERSQTVIRQGRDILHAWDATWNSAQALDNALQPDRAGQFADALEKYAAGLATALSRSPQITLEETPTSQAILPTLLKQEQHVCQLFARLPDWTAPALTPATEQAQGATQ.

A run of 9 helical transmembrane segments spans residues 43–63 (VILISMTFEIPFVALSLAVLF), 75–95 (FVAILFVVATVLEIGSLFLIY), 100–120 (GEPLIRLIIAGPILMGCMFLM), 125–145 (LGLVFFAVAIYGQTFPAMLDY), 155–175 (WCIVVGLYPTLLMTLIGVLWF), 399–419 (FGGAFCGAILALLFTLLVMPW), 423–443 (IVELLFVLAPIFLLGAWIATS), 454–474 (MVVTFALATLENVFGPVYDLV), and 480–500 (ALGIIIGTVVSAMIYTFVWPE).

It belongs to the MdtO family. As to quaternary structure, could be part of a tripartite efflux system composed of MdtN, MdtO and MdtP.

It is found in the cell inner membrane. Functionally, could be involved in resistance to puromycin, acriflavine and tetraphenylarsonium chloride. The protein is Multidrug resistance protein MdtO (mdtO) of Shigella flexneri.